Here is a 106-residue protein sequence, read N- to C-terminus: ATP-dependent Clp protease adapter protein ClpS (106 aa).

It belongs to the ClpS family. As to quaternary structure, binds to the N-terminal domain of the chaperone ClpA.

Its function is as follows. Involved in the modulation of the specificity of the ClpAP-mediated ATP-dependent protein degradation. The polypeptide is ATP-dependent Clp protease adapter protein ClpS (Vibrio campbellii (strain ATCC BAA-1116)).